We begin with the raw amino-acid sequence, 70 residues long: ATP synthase subunit c (70 aa).

Transmembrane regions (helical) follow at residues M1–N21 and F47–I67.

It belongs to the ATPase C chain family. As to quaternary structure, F-type ATPases have 2 components, F(1) - the catalytic core - and F(0) - the membrane proton channel. F(1) has five subunits: alpha(3), beta(3), gamma(1), delta(1), epsilon(1). F(0) has three main subunits: a(1), b(2) and c(10-14). The alpha and beta chains form an alternating ring which encloses part of the gamma chain. F(1) is attached to F(0) by a central stalk formed by the gamma and epsilon chains, while a peripheral stalk is formed by the delta and b chains.

It is found in the cell membrane. In terms of biological role, f(1)F(0) ATP synthase produces ATP from ADP in the presence of a proton or sodium gradient. F-type ATPases consist of two structural domains, F(1) containing the extramembraneous catalytic core and F(0) containing the membrane proton channel, linked together by a central stalk and a peripheral stalk. During catalysis, ATP synthesis in the catalytic domain of F(1) is coupled via a rotary mechanism of the central stalk subunits to proton translocation. Key component of the F(0) channel; it plays a direct role in translocation across the membrane. A homomeric c-ring of between 10-14 subunits forms the central stalk rotor element with the F(1) delta and epsilon subunits. In Latilactobacillus sakei subsp. sakei (strain 23K) (Lactobacillus sakei subsp. sakei), this protein is ATP synthase subunit c.